Consider the following 369-residue polypeptide: Peptide chain release factor 2 (369 aa).

At Gln251 the chain carries N5-methylglutamine.

It belongs to the prokaryotic/mitochondrial release factor family. In terms of processing, methylated by PrmC. Methylation increases the termination efficiency of RF2.

It is found in the cytoplasm. In terms of biological role, peptide chain release factor 2 directs the termination of translation in response to the peptide chain termination codons UGA and UAA. This chain is Peptide chain release factor 2 (prfB), found in Chlamydia pneumoniae (Chlamydophila pneumoniae).